Here is a 1035-residue protein sequence, read N- to C-terminus: Potassium-transporting ATPase alpha chain 1 (1035 aa).

The tract at residues 1–41 (MGKADNYELYSVELGPGPGGDMAAKMSKKKKAGGGGGKRKE) is disordered. Residues 1–98 (MGKADNYELY…NALRPPRGTP (98 aa)) lie on the Cytoplasmic side of the membrane. Phosphotyrosine is present on residues tyrosine 7 and tyrosine 10. A compositionally biased stretch (basic residues) spans 26–40 (MSKKKKAGGGGGKRK). The residue at position 27 (serine 27) is a Phosphoserine. The chain crosses the membrane as a helical span at residues 99 to 119 (EYVKFARQLAGGLQCLMWVAA). At 120 to 142 (AICLIAFAIQASEGDLTTDDNLY) the chain is on the lumenal side. The helical transmembrane segment at 143–163 (LALALIAVVVVTGCFGYYQEF) threads the bilayer. At 164 to 299 (KSTNIIASFK…NEKTPIAIEI (136 aa)) the chain is on the cytoplasmic side. The chain crosses the membrane as a helical span at residues 300–319 (EHFVDIIAGLAILFGATFFV). Over 320–331 (VAMCIGYTFLRA) the chain is Lumenal. Residues 332–349 (MVFFMAIVVAYVPEGLLA) form a helical membrane-spanning segment. 4 residues coordinate K(+): valine 340, alanine 341, valine 343, and glutamate 345. Residues 350 to 783 (TVTVCLSLTA…EQGRLIFDNL (434 aa)) are Cytoplasmic-facing. The 4-aspartylphosphate intermediate role is filled by aspartate 387. 2 residues coordinate Mg(2+): aspartate 387 and threonine 389. Phosphoserine occurs at positions 463 and 601. The Mg(2+) site is built by aspartate 728 and aspartate 732. The chain crosses the membrane as a helical span at residues 784 to 803 (KKSIAYTLTKNIPELTPYLI). Glutamate 797 is a binding site for K(+). Over 804 to 813 (YITVSVPLPL) the chain is Lumenal. The helical transmembrane segment at 814-834 (GCITILFIELCTDIFPSVSLA) threads the bilayer. K(+) is bound at residue glutamate 822. The Cytoplasmic segment spans residues 835 to 854 (YEKAESDIMHLRPRNPKRDR). The residue at position 840 (serine 840) is a Phosphoserine. The chain crosses the membrane as a helical span at residues 855–877 (LVNEPLAAYSYFQIGAIQSFAGF). Residues 878–929 (TDYFTAMAQEGWFPLLCVGLRPQWEDHHLQDLQDSYGQEWTFGQRLYQQYTC) lie on the Lumenal side of the membrane. The helical transmembrane segment at 930 to 949 (YTVFFISIEMCQIADVLIRK) threads the bilayer. At 950 to 963 (TRRLSAFQQGFFRN) the chain is on the cytoplasmic side. A Phosphoserine; by PKA modification is found at serine 954. The chain crosses the membrane as a helical span at residues 964–982 (RILVIAIVFQVCIGCFLCY). Over 983 to 997 (CPGMPNIFNFMPIRF) the chain is Lumenal. Residues 998 to 1018 (QWWLVPMPFGLLIFVYDEIRK) traverse the membrane as a helical segment. At 1019 to 1035 (LGVRCCPGSWWDQELYY) the chain is on the cytoplasmic side.

Belongs to the cation transport ATPase (P-type) (TC 3.A.3) family. Type IIC subfamily. In terms of assembly, the gastric H(+)/K(+) ATPase pump is composed of the catalytic alpha subunit ATP4A and the regulatory beta subunit ATP4B. Interacts (via the P-domain) with ATP4B (via N-terminus); this interaction stabilizes the lumenal-open E2 conformation state and prevents the reverse reaction of the transport cycle.

The protein resides in the apical cell membrane. It is found in the cell membrane. The enzyme catalyses K(+)(out) + ATP + H2O + H(+)(in) = K(+)(in) + ADP + phosphate + 2 H(+)(out). In terms of biological role, the catalytic subunit of the gastric H(+)/K(+) ATPase pump which transports H(+) ions in exchange for K(+) ions across the apical membrane of parietal cells. Uses ATP as an energy source to pump H(+) ions to the gastric lumen while transporting K(+) ion from the lumen into the cell. Remarkably generates a million-fold proton gradient across the gastric parietal cell membrane, acidifying the gastric juice down to pH 1. Within a transport cycle, the transfer of a H(+) ion across the membrane is coupled to ATP hydrolysis and is associated with a transient phosphorylation that shifts the pump conformation from inward-facing (E1) to outward-facing state (E2). The release of the H(+) ion in the stomach lumen is followed by binding of K(+) ion converting the pump conformation back to the E1 state. In Oryctolagus cuniculus (Rabbit), this protein is Potassium-transporting ATPase alpha chain 1 (ATP4A).